A 149-amino-acid chain; its full sequence is Transcriptional repressor NrdR (149 aa).

Residues 3–34 (CPFCSENDTKVIDSRLVADGHQVRRRRQCLAC) fold into a zinc finger. Residues 49–139 (PRVIKSNGNR…VYRSFEDVRE (91 aa)) enclose the ATP-cone domain.

It belongs to the NrdR family. Zn(2+) serves as cofactor.

Its function is as follows. Negatively regulates transcription of bacterial ribonucleotide reductase nrd genes and operons by binding to NrdR-boxes. The polypeptide is Transcriptional repressor NrdR (Vibrio cholerae serotype O1 (strain ATCC 39541 / Classical Ogawa 395 / O395)).